A 371-amino-acid polypeptide reads, in one-letter code: Methionine import ATP-binding protein MetN (371 aa).

The region spanning isoleucine 29–valine 270 is the ABC transporter domain. Position 67 to 74 (glycine 67 to serine 74) interacts with ATP.

Belongs to the ABC transporter superfamily. Methionine importer (TC 3.A.1.24) family. The complex is composed of two ATP-binding proteins (MetN), two transmembrane proteins (MetI) and a solute-binding protein (MetQ).

The protein resides in the cell inner membrane. The enzyme catalyses L-methionine(out) + ATP + H2O = L-methionine(in) + ADP + phosphate + H(+). The catalysed reaction is D-methionine(out) + ATP + H2O = D-methionine(in) + ADP + phosphate + H(+). Part of the ABC transporter complex MetNIQ involved in methionine import. Responsible for energy coupling to the transport system. This Rhodopseudomonas palustris (strain BisA53) protein is Methionine import ATP-binding protein MetN.